A 326-amino-acid polypeptide reads, in one-letter code: MSTAKFVVPKAVENVRIEKFCLKLLPNIKLSQFFKLLRLGKVLLNNTKAKLGQRVSSGDTIVFQFAIEPYLHNHSEVVDLTQVQDDLQVIFEDEQLIVVDKPAGVVCQPDAKHELFNLANSLLKHCGYNQYFKNSLSFIPRFAHRIDRNTCGLVIGAKTNQALQELEAVFRHNLLMKQYQGLVFGPFNFKGTQKAYWAKDAYQALVTVKAKPFPNAKPITTIFENSKYLTKLDLSLLTIRLVSGKTHQIRACLNLLNTQLVGDRKYQLLQFKNRNRDFKHQALHATNLSFAQLDKQKFPLLANYSQRQFKSQLVPWFASLIKGVSI.

An S4 RNA-binding domain is found at 15–76; the sequence is VRIEKFCLKL…IEPYLHNHSE (62 aa). Asp-147 is a catalytic residue.

This sequence belongs to the pseudouridine synthase RluA family.

The enzyme catalyses a uridine in RNA = a pseudouridine in RNA. This is an uncharacterized protein from Mycoplasma pneumoniae (strain ATCC 29342 / M129 / Subtype 1) (Mycoplasmoides pneumoniae).